Here is a 171-residue protein sequence, read N- to C-terminus: uncharacterized protein (171 aa).

Disordered stretches follow at residues 1-41 and 114-147; these read MDAV…SKPK and DSLGNTASSSSMDPAKGVPSQSGPPEGLGLRPKR. Residues 27–38 show a composition bias toward low complexity; it reads AQQQQGPSAQGS. Polar residues predominate over residues 116 to 125; the sequence is LGNTASSSSM.

This is an uncharacterized protein from Mus musculus (Mouse).